A 375-amino-acid polypeptide reads, in one-letter code: Thiamine-phosphate synthase (375 aa).

Positions 1-127 are unknown; it reads MTNAESRTVL…AACIESIRYQ (127 aa). The interval 128-375 is thiamine-phosphate synthase; that stretch reads CYATFRELEL…SSDVCPLPND (248 aa). Residues 183-185 and asparagine 215 each bind 4-amino-2-methyl-5-(diphosphooxymethyl)pyrimidine; that span reads QLR. Positions 216 and 235 each coordinate Mg(2+). Residues serine 254 and lysine 283 each coordinate 4-amino-2-methyl-5-(diphosphooxymethyl)pyrimidine. Glycine 315 is a binding site for 2-[(2R,5Z)-2-carboxy-4-methylthiazol-5(2H)-ylidene]ethyl phosphate.

Belongs to the thiamine-phosphate synthase family. Requires Mg(2+) as cofactor.

It catalyses the reaction 2-[(2R,5Z)-2-carboxy-4-methylthiazol-5(2H)-ylidene]ethyl phosphate + 4-amino-2-methyl-5-(diphosphooxymethyl)pyrimidine + 2 H(+) = thiamine phosphate + CO2 + diphosphate. The catalysed reaction is 2-(2-carboxy-4-methylthiazol-5-yl)ethyl phosphate + 4-amino-2-methyl-5-(diphosphooxymethyl)pyrimidine + 2 H(+) = thiamine phosphate + CO2 + diphosphate. It carries out the reaction 4-methyl-5-(2-phosphooxyethyl)-thiazole + 4-amino-2-methyl-5-(diphosphooxymethyl)pyrimidine + H(+) = thiamine phosphate + diphosphate. The protein operates within cofactor biosynthesis; thiamine diphosphate biosynthesis; thiamine phosphate from 4-amino-2-methyl-5-diphosphomethylpyrimidine and 4-methyl-5-(2-phosphoethyl)-thiazole: step 1/1. Its function is as follows. Condenses 4-methyl-5-(beta-hydroxyethyl)thiazole monophosphate (THZ-P) and 2-methyl-4-amino-5-hydroxymethyl pyrimidine pyrophosphate (HMP-PP) to form thiamine monophosphate (TMP). In Rhodopirellula baltica (strain DSM 10527 / NCIMB 13988 / SH1), this protein is Thiamine-phosphate synthase (thiE).